Reading from the N-terminus, the 178-residue chain is Deoxycytidylate deaminase (178 aa).

The CMP/dCMP-type deaminase domain maps to 14 to 145 (EWPEYFMAVA…EETTAARLLF (132 aa)). His84 lines the Zn(2+) pocket. Glu86 functions as the Proton donor in the catalytic mechanism. Residues Cys110 and Cys113 each contribute to the Zn(2+) site. Ser174 is subject to Phosphoserine.

It belongs to the cytidine and deoxycytidylate deaminase family. Homohexamer. It depends on Zn(2+) as a cofactor.

It carries out the reaction dCMP + H2O + H(+) = dUMP + NH4(+). The catalysed reaction is 5-hydroxymethyl-dCMP + H2O + H(+) = 5-hydroxymethyl-dUMP + NH4(+). With respect to regulation, allosteric enzyme whose activity is greatly influenced by the end products of its metabolic pathway, dCTP and dTTP. Functionally, catalyzes the deamination of dCMP to dUMP, providing the nucleoside monophosphate substrate for the thymidylate synthase/TYMS. Also, part of a nucleotide salvage pathway that eliminates epigenetically modified 5-hydroxymethyl-dCMP (hmdCMP) in a two-step process entailing deamination to cytotoxic 5-hydroxymethyl-dUMP (hmdUMP), followed by its hydrolysis into 5-hydroxymethyluracil (hmU) and 2-deoxy-D-ribose 5-phosphate (deoxyribosephosphate). Catalyzes the first step in that pathway, the deamination of 5-hydroxymethyl-dCMP (hmdCMP). This is Deoxycytidylate deaminase from Mus musculus (Mouse).